We begin with the raw amino-acid sequence, 157 residues long: Class 10 plant pathogenesis-related protein 2E (157 aa).

Asp8 contributes to the trans-zeatin binding site. Pro32, Val35, and Ile38 together coordinate Ca(2+). Trans-zeatin-binding residues include Glu60, His69, Tyr81, and Tyr83.

The protein belongs to the BetVI family.

The protein resides in the cytoplasm. It localises to the cytosol. Functionally, class II ribonuclease (RNase). Binds to cytokinins. Interacts with melatonin. The polypeptide is Class 10 plant pathogenesis-related protein 2E (Lupinus luteus (European yellow lupine)).